A 256-amino-acid polypeptide reads, in one-letter code: Imidazole glycerol phosphate synthase subunit hisF1 (256 aa).

Residues aspartate 12 and aspartate 131 contribute to the active site.

The protein belongs to the HisA/HisF family. In terms of assembly, heterodimer of HisH and HisF.

It localises to the cytoplasm. The catalysed reaction is 5-[(5-phospho-1-deoxy-D-ribulos-1-ylimino)methylamino]-1-(5-phospho-beta-D-ribosyl)imidazole-4-carboxamide + L-glutamine = D-erythro-1-(imidazol-4-yl)glycerol 3-phosphate + 5-amino-1-(5-phospho-beta-D-ribosyl)imidazole-4-carboxamide + L-glutamate + H(+). Its pathway is amino-acid biosynthesis; L-histidine biosynthesis; L-histidine from 5-phospho-alpha-D-ribose 1-diphosphate: step 5/9. Its function is as follows. IGPS catalyzes the conversion of PRFAR and glutamine to IGP, AICAR and glutamate. The HisF subunit catalyzes the cyclization activity that produces IGP and AICAR from PRFAR using the ammonia provided by the HisH subunit. The protein is Imidazole glycerol phosphate synthase subunit hisF1 (hisF1) of Pseudomonas aeruginosa (strain ATCC 15692 / DSM 22644 / CIP 104116 / JCM 14847 / LMG 12228 / 1C / PRS 101 / PAO1).